A 71-amino-acid polypeptide reads, in one-letter code: U3-scytotoxin-Sth1h (71 aa).

Residues 1–33 (MSQNSITSYKMGFAKHFFLFAVLLCATAMYSVA) form the signal peptide. The propeptide occupies 34 to 39 (EPAQER). 3 disulfides stabilise this stretch: C46/C60, C53/C64, and C59/C69.

In terms of tissue distribution, expressed by the venom gland.

The protein localises to the secreted. Its function is as follows. Probable insect neurotoxin with ion channel impairing activity. Does not show activity on 45 human receptors from 9 families (5-hydroxytryptamine, adrenergic, dopamine, muscarinic, histamine, neurotransmitter, opioid, sigma, and gaba(A) receptors). In vivo, when mixed with U3-SYTX-Sth1a does not cause paralytic or lethal activity when injected into crickets. It is noteworthy that crickets are evolutionarily distant from prey species. This chain is U3-scytotoxin-Sth1h, found in Scytodes thoracica (Spitting spider).